A 469-amino-acid polypeptide reads, in one-letter code: Cysteine--tRNA ligase (469 aa).

Cysteine 28 serves as a coordination point for Zn(2+). A 'HIGH' region motif is present at residues 30–40; that stretch reads CTVYDLCHIGH. The Zn(2+) site is built by cysteine 216, histidine 241, and glutamate 245. The short motif at 273-277 is the 'KMSKS' region element; it reads KMSKS. Lysine 276 contacts ATP.

Belongs to the class-I aminoacyl-tRNA synthetase family. In terms of assembly, monomer. Zn(2+) serves as cofactor.

It is found in the cytoplasm. The enzyme catalyses tRNA(Cys) + L-cysteine + ATP = L-cysteinyl-tRNA(Cys) + AMP + diphosphate. The chain is Cysteine--tRNA ligase from Colwellia psychrerythraea (strain 34H / ATCC BAA-681) (Vibrio psychroerythus).